The chain runs to 609 residues: Glutamine--fructose-6-phosphate aminotransferase [isomerizing] (609 aa).

C2 acts as the Nucleophile; for GATase activity in catalysis. Positions 2-219 (CGIFGYLGNQ…SGEFAIVSQG (218 aa)) constitute a Glutamine amidotransferase type-2 domain. 2 SIS domains span residues 285 to 426 (LSDV…VHGA) and 458 to 599 (WAQP…IDCP). Residue K604 is the For Fru-6P isomerization activity of the active site.

As to quaternary structure, homodimer.

The protein resides in the cytoplasm. The catalysed reaction is D-fructose 6-phosphate + L-glutamine = D-glucosamine 6-phosphate + L-glutamate. Catalyzes the first step in hexosamine metabolism, converting fructose-6P into glucosamine-6P using glutamine as a nitrogen source. This is Glutamine--fructose-6-phosphate aminotransferase [isomerizing] from Chlamydia pneumoniae (Chlamydophila pneumoniae).